The following is a 504-amino-acid chain: Deoxyguanosinetriphosphate triphosphohydrolase (504 aa).

In terms of domain architecture, HD spans 66–273 (RLTHSMEVQQ…MEAADDISYC (208 aa)).

The protein belongs to the dGTPase family. Type 1 subfamily. In terms of assembly, homotetramer. Mg(2+) serves as cofactor.

The catalysed reaction is dGTP + H2O = 2'-deoxyguanosine + triphosphate + H(+). In terms of biological role, dGTPase preferentially hydrolyzes dGTP over the other canonical NTPs. The protein is Deoxyguanosinetriphosphate triphosphohydrolase of Citrobacter koseri (strain ATCC BAA-895 / CDC 4225-83 / SGSC4696).